We begin with the raw amino-acid sequence, 178 residues long: Ribosome maturation factor RimM (178 aa).

The region spanning 99 to 178 is the PRC barrel domain; the sequence is EGDFYWHDLI…TIEVDWDAGF (80 aa).

The protein belongs to the RimM family. Binds ribosomal protein uS19.

The protein resides in the cytoplasm. An accessory protein needed during the final step in the assembly of 30S ribosomal subunit, possibly for assembly of the head region. Essential for efficient processing of 16S rRNA. May be needed both before and after RbfA during the maturation of 16S rRNA. It has affinity for free ribosomal 30S subunits but not for 70S ribosomes. This Mannheimia succiniciproducens (strain KCTC 0769BP / MBEL55E) protein is Ribosome maturation factor RimM.